A 398-amino-acid chain; its full sequence is Bifunctional enzyme IspD/IspF (398 aa).

The 2-C-methyl-D-erythritol 4-phosphate cytidylyltransferase stretch occupies residues 1–237 (MSISIAAIIL…QKKMQMFPDI (237 aa)). A 2-C-methyl-D-erythritol 2,4-cyclodiphosphate synthase region spans residues 238–398 (RVGNGYDVHS…SVLYPGEIPQ (161 aa)). The a divalent metal cation site is built by Asp-244 and His-246. 4-CDP-2-C-methyl-D-erythritol 2-phosphate contacts are provided by residues 244 to 246 (DVH) and 270 to 271 (HS). A divalent metal cation is bound at residue His-278. Residues 292–294 (DIG), 368–371 (TTNE), Phe-375, and Arg-378 contribute to the 4-CDP-2-C-methyl-D-erythritol 2-phosphate site.

It in the N-terminal section; belongs to the IspD/TarI cytidylyltransferase family. IspD subfamily. In the C-terminal section; belongs to the IspF family. A divalent metal cation serves as cofactor.

The catalysed reaction is 2-C-methyl-D-erythritol 4-phosphate + CTP + H(+) = 4-CDP-2-C-methyl-D-erythritol + diphosphate. The enzyme catalyses 4-CDP-2-C-methyl-D-erythritol 2-phosphate = 2-C-methyl-D-erythritol 2,4-cyclic diphosphate + CMP. It participates in isoprenoid biosynthesis; isopentenyl diphosphate biosynthesis via DXP pathway; isopentenyl diphosphate from 1-deoxy-D-xylulose 5-phosphate: step 2/6. The protein operates within isoprenoid biosynthesis; isopentenyl diphosphate biosynthesis via DXP pathway; isopentenyl diphosphate from 1-deoxy-D-xylulose 5-phosphate: step 4/6. In terms of biological role, bifunctional enzyme that catalyzes the formation of 4-diphosphocytidyl-2-C-methyl-D-erythritol from CTP and 2-C-methyl-D-erythritol 4-phosphate (MEP) (IspD), and catalyzes the conversion of 4-diphosphocytidyl-2-C-methyl-D-erythritol 2-phosphate (CDP-ME2P) to 2-C-methyl-D-erythritol 2,4-cyclodiphosphate (ME-CPP) with a corresponding release of cytidine 5-monophosphate (CMP) (IspF). This Bartonella tribocorum (strain CIP 105476 / IBS 506) protein is Bifunctional enzyme IspD/IspF.